Consider the following 203-residue polypeptide: MSRYRGPKLKISRRLGTLPGLTTKKSNKLNRPGKDGNTDIGKKLTEYGVRLEEKQKLKFNYGLTEKQLFRYVKEARRRQGVTGLILLQLLEMRLDTLCFTLGFAKSLAQARQLVNHGHITINKKVVSIPSFQCRLNDIISIKEKSSSKTLVETNIKNNQVREIPTHLRFDTVKLEAIVLDYCDRNDVSLQLDELLVIEHYSRR.

The disordered stretch occupies residues 17-39; the sequence is TLPGLTTKKSNKLNRPGKDGNTD. One can recognise an S4 RNA-binding domain in the interval 92–164; that stretch reads MRLDTLCFTL…IKNNQVREIP (73 aa).

This sequence belongs to the universal ribosomal protein uS4 family. As to quaternary structure, part of the 30S ribosomal subunit. Contacts protein S5. The interaction surface between S4 and S5 is involved in control of translational fidelity.

The protein localises to the plastid. It localises to the chloroplast. Functionally, one of the primary rRNA binding proteins, it binds directly to 16S rRNA where it nucleates assembly of the body of the 30S subunit. With S5 and S12 plays an important role in translational accuracy. This chain is Small ribosomal subunit protein uS4c (rps4), found in Phaeodactylum tricornutum (strain CCAP 1055/1).